Reading from the N-terminus, the 284-residue chain is NAD kinase (284 aa).

Residue Asp-65 is the Proton acceptor of the active site. Residues 65 to 66 (DG), 139 to 140 (ND), Arg-150, Arg-167, Asp-169, and Gln-239 contribute to the NAD(+) site.

It belongs to the NAD kinase family. A divalent metal cation is required as a cofactor.

Its subcellular location is the cytoplasm. It catalyses the reaction NAD(+) + ATP = ADP + NADP(+) + H(+). Functionally, involved in the regulation of the intracellular balance of NAD and NADP, and is a key enzyme in the biosynthesis of NADP. Catalyzes specifically the phosphorylation on 2'-hydroxyl of the adenosine moiety of NAD to yield NADP. The chain is NAD kinase from Desulfatibacillum aliphaticivorans.